A 161-amino-acid polypeptide reads, in one-letter code: Vasotocin-neurophysin VT (161 aa).

Positions 1-22 (MSAMGWTLLAAALLAISAQSNG) are cleaved as a signal peptide. Cysteine 23 and cysteine 28 are oxidised to a cystine. A Glycine amide modification is found at glycine 31. 7 disulfide bridges follow: cysteine 43/cysteine 91, cysteine 46/cysteine 58, cysteine 52/cysteine 81, cysteine 59/cysteine 71, cysteine 99/cysteine 111, cysteine 105/cysteine 123, and cysteine 112/cysteine 117.

The protein belongs to the vasopressin/oxytocin family.

Its subcellular location is the secreted. In terms of biological role, vasotocin is an antidiuretic hormone. The sequence is that of Vasotocin-neurophysin VT from Eptatretus stoutii (Pacific hagfish).